We begin with the raw amino-acid sequence, 335 residues long: Anthranilate phosphoribosyltransferase (335 aa).

5-phospho-alpha-D-ribose 1-diphosphate-binding positions include Gly-79, 82–83 (GD), Thr-87, 89–92 (NVST), 107–115 (KHCNKGVSS), and Ser-119. Position 79 (Gly-79) interacts with anthranilate. Residue Ser-91 coordinates Mg(2+). Asn-110 is an anthranilate binding site. Anthranilate is bound at residue Arg-165. Mg(2+) contacts are provided by Asp-223 and Glu-224.

It belongs to the anthranilate phosphoribosyltransferase family. As to quaternary structure, homodimer. Requires Mg(2+) as cofactor.

The catalysed reaction is N-(5-phospho-beta-D-ribosyl)anthranilate + diphosphate = 5-phospho-alpha-D-ribose 1-diphosphate + anthranilate. It functions in the pathway amino-acid biosynthesis; L-tryptophan biosynthesis; L-tryptophan from chorismate: step 2/5. Catalyzes the transfer of the phosphoribosyl group of 5-phosphorylribose-1-pyrophosphate (PRPP) to anthranilate to yield N-(5'-phosphoribosyl)-anthranilate (PRA). This chain is Anthranilate phosphoribosyltransferase, found in Buchnera aphidicola subsp. Schizaphis graminum (strain Sg).